Here is a 641-residue protein sequence, read N- to C-terminus: Tetracycline resistance protein TetS (641 aa).

The region spanning 1–242 (MKIINIGILA…VITSKLFSPT (242 aa)) is the tr-type G domain. Residues 10–17 (AHVDAGKT), 74–78 (DTPGH), and 128–131 (NKID) each bind GTP.

The protein belongs to the TRAFAC class translation factor GTPase superfamily. Classic translation factor GTPase family. TetM/TetO subfamily.

Its function is as follows. Abolishes the inhibitory effect of tetracyclin on protein synthesis by a non-covalent modification of the ribosomes. This is Tetracycline resistance protein TetS (tetS) from Listeria monocytogenes.